Here is a 342-residue protein sequence, read N- to C-terminus: Succinylglutamate desuccinylase (342 aa).

Zn(2+) contacts are provided by His-63, Glu-66, and His-155. Residue Glu-219 is part of the active site.

The protein belongs to the AspA/AstE family. Succinylglutamate desuccinylase subfamily. It depends on Zn(2+) as a cofactor.

It carries out the reaction N-succinyl-L-glutamate + H2O = L-glutamate + succinate. It participates in amino-acid degradation; L-arginine degradation via AST pathway; L-glutamate and succinate from L-arginine: step 5/5. Functionally, transforms N(2)-succinylglutamate into succinate and glutamate. The sequence is that of Succinylglutamate desuccinylase from Vibrio vulnificus (strain CMCP6).